Reading from the N-terminus, the 115-residue chain is Large ribosomal subunit protein bL31B (115 aa).

Belongs to the bacterial ribosomal protein bL31 family. Type B subfamily. As to quaternary structure, part of the 50S ribosomal subunit.

This Polynucleobacter necessarius subsp. necessarius (strain STIR1) protein is Large ribosomal subunit protein bL31B.